An 81-amino-acid chain; its full sequence is MKQGIHPDFQKVVFMDSATGAKFVAGSTMKPEETIEYEGETYPLVRVEVSSDSHPFYTGKQKFAQADGRIEKFNKKYGLKK.

This sequence belongs to the bacterial ribosomal protein bL31 family. Type B subfamily. Part of the 50S ribosomal subunit.

This Lactobacillus acidophilus (strain ATCC 700396 / NCK56 / N2 / NCFM) protein is Large ribosomal subunit protein bL31B.